The chain runs to 128 residues: Fluoride-specific ion channel FluC (128 aa).

The next 4 helical transmembrane spans lie at 7–29 (LNFI…LGLR), 36–57 (PWGT…VALI), 65–94 (AWIR…DMLE), and 98–126 (YATA…VRLL). A fluoride-binding site is contributed by N43. The Na(+) site is built by G77 and T80. Residues Y104, S108, and S112 each coordinate fluoride.

This sequence belongs to the fluoride channel Fluc/FEX (TC 1.A.43) family. In terms of assembly, homodimer.

Its subcellular location is the cell inner membrane. It carries out the reaction fluoride(in) = fluoride(out). Na(+) is not transported, but it plays an essential structural role and its presence is essential for fluoride channel function. The Na(+)-binding site is specific for Na(+) over most other cations including K(+) and Mg(2+). Fluoride efflux is inhibited by Li(2+). Its function is as follows. Fluoride-specific ion channel. Important for reducing fluoride concentration in the cell, thus reducing its toxicity. Is highly specific for fluoride ions and cannot transport chloride ions. The polypeptide is Fluoride-specific ion channel FluC (Bordetella pertussis (strain Tohama I / ATCC BAA-589 / NCTC 13251)).